Here is a 119-residue protein sequence, read N- to C-terminus: MVKLAFPRELRLLTPAHFTFVFQQPQRAGTPQITILGRLNSLGHPRIGLTVAKKNVRRAHERNRIKRLTRESFRLRQHELPAMDFVVVAKKGVADLDNRALSEALEKLWRRHCRLARGS.

It belongs to the RnpA family. Consists of a catalytic RNA component (M1 or rnpB) and a protein subunit.

It catalyses the reaction Endonucleolytic cleavage of RNA, removing 5'-extranucleotides from tRNA precursor.. In terms of biological role, RNaseP catalyzes the removal of the 5'-leader sequence from pre-tRNA to produce the mature 5'-terminus. It can also cleave other RNA substrates such as 4.5S RNA. The protein component plays an auxiliary but essential role in vivo by binding to the 5'-leader sequence and broadening the substrate specificity of the ribozyme. The protein is Ribonuclease P protein component of Salmonella schwarzengrund (strain CVM19633).